We begin with the raw amino-acid sequence, 457 residues long: Beta-1,4-mannosyltransferase egh (457 aa).

A run of 6 helical transmembrane segments spans residues 8–28 (LLHCTLLITVIVTFEVFSGGI), 35–55 (FTLVDPWTEYGQLATVLLYLL), 57–77 (FLTLLTLPQVLFNFCGLVFYN), 346–366 (LLGISVYSWVTMPLSTSNIIF), 378–398 (VDFVCAFIAAINIYMYVFGVI), and 415–435 (VLGAVCTIPVNVVIENVAVIW).

This sequence belongs to the glycosyltransferase 2 family.

The protein resides in the membrane. Glycosyltransferase with a proposed role in glycosphingolipid biosynthesis. Neurogenic protein implicated in epithelial development. Critical component of a differential oocyte-follicle cell adhesive system. This chain is Beta-1,4-mannosyltransferase egh (egh), found in Drosophila melanogaster (Fruit fly).